Consider the following 150-residue polypeptide: MKLSDIDKGTYAAVKFDDSTLDMFQALQQIMELFNPVPRDKLHSTICFSRVKIPYIPLTEKMPIGSTHKLEVFEHNGKRALVVLLDSPYLESRHEYANILGATFDFPTYNPHVTLAYDIGAMEIPKHGVTGNPVVITHEYTEDLDLNWKP.

Tyr-11 serves as a coordination point for 3',3'-cGAMP. Tyr-11 serves as a coordination point for 3',3'-cUAMP. Residues His-43 and Thr-45 contribute to the active site. Phe-73 provides a ligand contact to 3',3'-cGAMP. Phe-73 provides a ligand contact to 3',3'-cUAMP. Active-site residues include His-112 and Thr-114. Residues Glu-142 and Trp-148 each coordinate 3',3'-cGAMP. 3',3'-cUAMP contacts are provided by Glu-142 and Trp-148.

It belongs to the anti-CBASS protein Acb1 family.

It catalyses the reaction 3',3'-cUAMP + H2O = U[3'-5']pAp[3'] + H(+). The catalysed reaction is 3',3',3'-c-tri-AMP + H2O = A[3'-5']pA[3'-5']pAp[3'] + H(+). It carries out the reaction 3',3',3'-cAAG + H2O = G[3'-5']pA[3'-5']pAp[3'] + H(+). The enzyme catalyses 3',3',3'-cAAG + H2O = A[3'-5']pG[3'-5']pAp[3'] + H(+). It catalyses the reaction 3',3'-cGAMP + H2O = G[3'-5']pAp[3'] + H(+). Functionally, counteracts the host CBASS antiviral defense system. Phosphodiesterase that enables metal-independent hydrolysis of the host cyclic di- and trinucleotide CBASS signals such as 3'3'-cGAMP, 3'3'cUA, and 3'3'3'-cAAA. Does not cleave cGG or cA4. Besides evasion of the CBASS system, might also enable evasion of the type III CRISPR systems that use cA3 signals. This chain is Anti-CBASS protein Acb1, found in Acinetobacter sp. (Acinetobacter phage 42).